The primary structure comprises 279 residues: Tryptophan synthase alpha chain (279 aa).

Catalysis depends on proton acceptor residues Glu-50 and Asp-61.

It belongs to the TrpA family. As to quaternary structure, tetramer of two alpha and two beta chains.

The enzyme catalyses (1S,2R)-1-C-(indol-3-yl)glycerol 3-phosphate + L-serine = D-glyceraldehyde 3-phosphate + L-tryptophan + H2O. Its pathway is amino-acid biosynthesis; L-tryptophan biosynthesis; L-tryptophan from chorismate: step 5/5. Functionally, the alpha subunit is responsible for the aldol cleavage of indoleglycerol phosphate to indole and glyceraldehyde 3-phosphate. The polypeptide is Tryptophan synthase alpha chain (Brucella suis biovar 1 (strain 1330)).